Reading from the N-terminus, the 118-residue chain is Large ribosomal subunit protein bL19 (118 aa).

It belongs to the bacterial ribosomal protein bL19 family.

This protein is located at the 30S-50S ribosomal subunit interface and may play a role in the structure and function of the aminoacyl-tRNA binding site. This Marinobacter nauticus (strain ATCC 700491 / DSM 11845 / VT8) (Marinobacter aquaeolei) protein is Large ribosomal subunit protein bL19.